The primary structure comprises 244 residues: tRNA (guanine-N(7)-)-methyltransferase (244 aa).

S-adenosyl-L-methionine-binding residues include glutamate 75, glutamate 100, aspartate 127, and aspartate 150. Aspartate 150 is an active-site residue. Residues lysine 154, aspartate 186, and 223–226 (TRFE) each bind substrate.

This sequence belongs to the class I-like SAM-binding methyltransferase superfamily. TrmB family.

It carries out the reaction guanosine(46) in tRNA + S-adenosyl-L-methionine = N(7)-methylguanosine(46) in tRNA + S-adenosyl-L-homocysteine. Its pathway is tRNA modification; N(7)-methylguanine-tRNA biosynthesis. Catalyzes the formation of N(7)-methylguanine at position 46 (m7G46) in tRNA. This Xylella fastidiosa (strain M12) protein is tRNA (guanine-N(7)-)-methyltransferase.